Consider the following 164-residue polypeptide: Peptidyl-prolyl cis-trans isomerase A (164 aa).

M1 bears the N-acetylmethionine mark. An N-acetylvaline; in Peptidyl-prolyl cis-trans isomerase A, N-terminally processed modification is found at V2. The region spanning 7–163 is the PPIase cyclophilin-type domain; the sequence is FFDIAVDGEP…KKITIADCGQ (157 aa). N6-acetyllysine; alternate is present on K28. K28 is covalently cross-linked (Glycyl lysine isopeptide (Lys-Gly) (interchain with G-Cter in SUMO2); alternate). K28 is covalently cross-linked (Glycyl lysine isopeptide (Lys-Gly) (interchain with G-Cter in ubiquitin); alternate). An N6-acetyllysine mark is found at K44 and K76. C62 and C161 are disulfide-bonded. A Phosphoserine modification is found at S77. K82 is subject to N6-acetyllysine; alternate. K82 participates in a covalent cross-link: Glycyl lysine isopeptide (Lys-Gly) (interchain with G-Cter in SUMO2); alternate. T93 carries the post-translational modification Phosphothreonine. N-linked (GlcNAc...) asparagine glycosylation occurs at N108. Residues K125, K131, and K133 each carry the N6-acetyllysine modification.

This sequence belongs to the cyclophilin-type PPIase family. PPIase A subfamily. Interacts with protein phosphatase PPP3CA/calcineurin A. Interacts with isoform 2 of BSG/CD147. Interacts with FOXO1; the interaction promotes FOXO1 dephosphorylation, nuclear accumulation and transcriptional activity. Interacts with integrin ITGA2B:ITGB3; the interaction is ROS and peptidyl-prolyl cis-trans isomerase (PPIase) activity-dependent and is increased in the presence of thrombin. Interacts with MAP3K5. Interacts with TARDBP; the interaction is dependent on the RNA-binding activity of TARDBP and the PPIase activity of PPIA/CYPA and the acetylation of PPIA/CYPA at Lys-125 favors the interaction. Interacts with HNRNPA1, HNRNPA2B1, HNRNPC, RBMX, HNRNPK and HNRNPM. Post-translationally, acetylation at Lys-125 markedly inhibits catalysis of cis to trans isomerization. PPIA acetylation also antagonizes the immunosuppressive effects of cyclosporine by inhibiting the sequential steps of cyclosporine binding and calcineurin inhibition. Acetylation at Lys-125 favors the interaction with TARDBP.

It localises to the cytoplasm. It is found in the secreted. The protein resides in the nucleus. It carries out the reaction [protein]-peptidylproline (omega=180) = [protein]-peptidylproline (omega=0). With respect to regulation, binds cyclosporin A (CsA). CsA mediates some of its effects via an inhibitory action on PPIase. In terms of biological role, catalyzes the cis-trans isomerization of proline imidic peptide bonds in oligopeptides. Exerts a strong chemotactic effect on leukocytes partly through activation of one of its membrane receptors BSG/CD147, initiating a signaling cascade that culminates in MAPK/ERK activation. Activates endothelial cells (ECs) in a proinflammatory manner by stimulating activation of NF-kappa-B and ERK, JNK and p38 MAP-kinases and by inducing expression of adhesion molecules including SELE and VCAM1. Induces apoptosis in ECs by promoting the FOXO1-dependent expression of CCL2 and BCL2L11 which are involved in EC chemotaxis and apoptosis. In response to oxidative stress, initiates proapoptotic and antiapoptotic signaling in ECs via activation of NF-kappa-B and AKT1 and up-regulation of antiapoptotic protein BCL2. Negatively regulates MAP3K5/ASK1 kinase activity, autophosphorylation and oxidative stress-induced apoptosis mediated by MAP3K5/ASK1. Necessary for the assembly of TARDBP in heterogeneous nuclear ribonucleoprotein (hnRNP) complexes and regulates TARDBP binding to RNA UG repeats and TARDBP-dependent expression of HDAC6, ATG7 and VCP which are involved in clearance of protein aggregates. Plays an important role in platelet activation and aggregation. Regulates calcium mobilization and integrin ITGA2B:ITGB3 bidirectional signaling via increased ROS production as well as by facilitating the interaction between integrin and the cell cytoskeleton. Binds heparan sulfate glycosaminoglycans. This chain is Peptidyl-prolyl cis-trans isomerase A (PPIA), found in Bos taurus (Bovine).